The primary structure comprises 100 residues: Aspartyl/glutamyl-tRNA(Asn/Gln) amidotransferase subunit C (100 aa).

Belongs to the GatC family. Heterotrimer of A, B and C subunits.

It catalyses the reaction L-glutamyl-tRNA(Gln) + L-glutamine + ATP + H2O = L-glutaminyl-tRNA(Gln) + L-glutamate + ADP + phosphate + H(+). The enzyme catalyses L-aspartyl-tRNA(Asn) + L-glutamine + ATP + H2O = L-asparaginyl-tRNA(Asn) + L-glutamate + ADP + phosphate + 2 H(+). In terms of biological role, allows the formation of correctly charged Asn-tRNA(Asn) or Gln-tRNA(Gln) through the transamidation of misacylated Asp-tRNA(Asn) or Glu-tRNA(Gln) in organisms which lack either or both of asparaginyl-tRNA or glutaminyl-tRNA synthetases. The reaction takes place in the presence of glutamine and ATP through an activated phospho-Asp-tRNA(Asn) or phospho-Glu-tRNA(Gln). The sequence is that of Aspartyl/glutamyl-tRNA(Asn/Gln) amidotransferase subunit C from Rickettsia peacockii (strain Rustic).